A 651-amino-acid chain; its full sequence is Transcription factor E2-alpha (651 aa).

Disordered regions lie at residues 32–107 (ANGK…SERN), 131–208 (LSLS…KTPS), and 341–378 (DHSS…ALSP). Low complexity-rich tracts occupy residues 56-73 (SSGS…FDPS), 131-148 (LSLS…KSSS), and 341-354 (DHSS…PSTP). 2 positions are modified to phosphoserine: Ser135 and Ser140. Residue Thr353 is modified to Phosphothreonine. Ser357 carries the post-translational modification Phosphoserine. Arg369 carries the omega-N-methylarginine modification. Ser377 bears the Phosphoserine mark. The tract at residues 387 to 422 (LSKMEDRLDEAIHVLRSHAVGTASDLHGLLPGHGAL) is leucine-zipper. Residues 457-549 (HNHASLPSQP…KAEREKERRV (93 aa)) are disordered. Over residues 461 to 479 (SLPSQPSSLPDLSQRPPDS) the composition is skewed to low complexity. A Glycyl lysine isopeptide (Lys-Gly) (interchain with G-Cter in SUMO2) cross-link involves residue Lys496. Ser526 carries the post-translational modification Phosphoserine. Phosphothreonine is present on Asp528. Asp533 carries the phosphoserine modification. Residues 539–549 (QKAEREKERRV) show a composition bias toward basic and acidic residues. A bHLH domain is found at 546 to 599 (ERRVANNARERLRVRDINEAFKELGRMCQLHLSSEKPQTKLLILHQAVAVILSL). Residue Lys622 forms a Glycyl lysine isopeptide (Lys-Gly) (interchain with G-Cter in SUMO2) linkage.

Homodimer. Heterodimer; efficient DNA binding requires dimerization with another bHLH protein. Forms a heterodimer with TWIST1 and TWIST2. Forms a heterodimer with NEUROD1; the heterodimer is inhibited in presence of ID2, but not NR0B2, to E-box element. Forms a heterodimer with TCF15; the heterodimer binds E-box element. Forms a heterodimer with MYOG; heterodimerization enhances MYOG DNA-binding and transcriptional activities. Forms a heterodimer with ATOH8; repress transcription of TCF3 and TCF3-NEUROG3 dimer-induced transactivation of E box-dependent promoters. Component of a nuclear TAL-1 complex composed at least of CBFA2T3, LDB1, TAL1 and TCF3. Interacts with NEUROD2. Interacts with EP300. Interacts with PTF1A, TGFB1I1 and UBE2I. Interacts with BHLHA9. Interacts with ASB2; the interaction is mediated by SKP2 and targets TCF3 for Notch-induced proteasomal degradation. Interacts with transcription factor ASCL5/AmeloD. As to quaternary structure, forms a heterodimer with ATOH7; required for ATOH7 DNA-binding. In terms of assembly, interacts with RALGAPA1. Interacts with FIGLA. In terms of processing, phosphorylated following NGF stimulation. Undergoes Notch-induced ubiquitination and subsequent proteasomal degradation which is mediated by ASB1 or ASB2, the substrate-recognition components of probable ECS E3 ubiquitin-protein ligase complexes.

It is found in the nucleus. In terms of biological role, transcriptional regulator involved in the initiation of neuronal differentiation and mesenchymal to epithelial transition. Heterodimers between TCF3 and tissue-specific basic helix-loop-helix (bHLH) proteins play major roles in determining tissue-specific cell fate during embryogenesis, like muscle or early B-cell differentiation. Together with TCF15, required for the mesenchymal to epithelial transition. Dimers bind DNA on E-box motifs: 5'-CANNTG-3'. Binds to the kappa-E2 site in the kappa immunoglobulin gene enhancer. Binds to IEB1 and IEB2, which are short DNA sequences in the insulin gene transcription control region. Facilitates ATOH7 binding to DNA at the consensus sequence 5'-CAGGTG-3', and positively regulates transcriptional activity. The protein is Transcription factor E2-alpha (Tcf3) of Mus musculus (Mouse).